A 300-amino-acid chain; its full sequence is GTP cyclohydrolase FolE2 (300 aa).

The protein belongs to the GTP cyclohydrolase IV family.

The catalysed reaction is GTP + H2O = 7,8-dihydroneopterin 3'-triphosphate + formate + H(+). It functions in the pathway cofactor biosynthesis; 7,8-dihydroneopterin triphosphate biosynthesis; 7,8-dihydroneopterin triphosphate from GTP: step 1/1. Its function is as follows. Converts GTP to 7,8-dihydroneopterin triphosphate. This is GTP cyclohydrolase FolE2 from Bacillus licheniformis (strain ATCC 14580 / DSM 13 / JCM 2505 / CCUG 7422 / NBRC 12200 / NCIMB 9375 / NCTC 10341 / NRRL NRS-1264 / Gibson 46).